A 336-amino-acid chain; its full sequence is F420-dependent glucose-6-phosphate dehydrogenase (336 aa).

Asp-39 contributes to the coenzyme F420-(gamma-Glu)n binding site. His-40 (proton donor) is an active-site residue. Residues Thr-76 and 107–108 contribute to the coenzyme F420-(gamma-Glu)n site; that span reads TG. Glu-109 serves as the catalytic Proton acceptor. Residues Asn-112, 177–178, and 180–181 contribute to the coenzyme F420-(gamma-Glu)n site; these read GG and VV. 4 residues coordinate substrate: Thr-195, Lys-198, Lys-259, and Arg-283.

This sequence belongs to the F420-dependent glucose-6-phosphate dehydrogenase family. Homodimer.

The catalysed reaction is oxidized coenzyme F420-(gamma-L-Glu)(n) + D-glucose 6-phosphate + H(+) = 6-phospho-D-glucono-1,5-lactone + reduced coenzyme F420-(gamma-L-Glu)(n). Functionally, catalyzes the coenzyme F420-dependent oxidation of glucose 6-phosphate (G6P) to 6-phosphogluconolactone. Appears to have a role in resistance to oxidative stress, via its consumption of G6P that serves as a source of reducing power to combat oxidative stress in mycobacteria. This Mycolicibacterium fortuitum (Mycobacterium fortuitum) protein is F420-dependent glucose-6-phosphate dehydrogenase.